The chain runs to 37 residues: GILDSFKQFAKGVGKDLIKGAAQGVLSTMSCKLAKTC.

A disulfide bond links cysteine 31 and cysteine 37.

This sequence belongs to the frog skin active peptide (FSAP) family. Brevinin subfamily. In terms of tissue distribution, expressed by the skin glands.

It localises to the secreted. Functionally, has antibacterial activity against Gram-positive bacteria. The chain is Rugosin-C from Glandirana rugosa (Japanese wrinkled frog).